The primary structure comprises 263 residues: Splicing regulator sde2 (263 aa).

Positions 1 to 84 (MECKTVFLNG…LTLCTRVLGG (84 aa)) are cleaved as a propeptide — UBL. Disordered regions lie at residues 95–118 (AGGR…LDGN), 137–158 (PAET…LAAD), and 194–263 (STSA…LYGL). The segment covering 102–117 (KRNEQENQDSCRDLDG) has biased composition (basic and acidic residues). Low complexity-rich tracts occupy residues 194–209 (STSA…GATT) and 219–230 (NNNSSINSWSRR).

The protein belongs to the SDE2 family. In terms of assembly, interacts with cay1/cactin. Interacts with prp19. Interacts with cwf12. Interacts with cdc5. Post-translationally, the N-terminal UBL (ubiquitin-like) propeptide is cleaved at Gly-84 by the deubiquitinating enzymes ubp5 and ubp15; the resulting mature sde2 associates with spliceosomes. In terms of processing, polyubiquitinated; ubiquitination is partially dependent on ubr11.

The protein localises to the cytoplasm. It is found in the nucleus. Functionally, plays a role in pre-mRNA splicing by facilitating excision of introns featuring relatively long (&gt;21 nucleotides) spacing between the branchpoint and 3'-splice site (ss). Recruits cactin to the spliceosome which may enable folding of RNA between the branchpoint and 3'-ss, to guide the splice site towards the spliceosome's catalytic center. Required for proper chromatin organization by assisting splicing of components involved in genomic stability and telomere organization. This is Splicing regulator sde2 from Schizosaccharomyces pombe (strain 972 / ATCC 24843) (Fission yeast).